The primary structure comprises 120 residues: MFLLHEYDIFWAFLIIASLIPILAFWISALLAPVREGPEKLSSYESGIEPMGGAWLQFRIRYYMFALVFVVFDVETVFLYPWAMSFDVLGISVFIEAFIFVLILVVGLVYAWRKGALEWS.

3 consecutive transmembrane segments (helical) span residues 9–29, 64–84, and 88–108; these read IFWA…WISA, MFAL…PWAM, and VLGI…VVGL.

This sequence belongs to the complex I subunit 3 family. As to quaternary structure, NDH is composed of at least 16 different subunits, 5 of which are encoded in the nucleus.

The protein localises to the plastid. It is found in the chloroplast thylakoid membrane. The catalysed reaction is a plastoquinone + NADH + (n+1) H(+)(in) = a plastoquinol + NAD(+) + n H(+)(out). It catalyses the reaction a plastoquinone + NADPH + (n+1) H(+)(in) = a plastoquinol + NADP(+) + n H(+)(out). NDH shuttles electrons from NAD(P)H:plastoquinone, via FMN and iron-sulfur (Fe-S) centers, to quinones in the photosynthetic chain and possibly in a chloroplast respiratory chain. The immediate electron acceptor for the enzyme in this species is believed to be plastoquinone. Couples the redox reaction to proton translocation, and thus conserves the redox energy in a proton gradient. The sequence is that of NAD(P)H-quinone oxidoreductase subunit 3, chloroplastic from Oryza nivara (Indian wild rice).